The following is a 169-amino-acid chain: Small ribosomal subunit protein uS5 (169 aa).

In terms of domain architecture, S5 DRBM spans 13–76 (LVEKLVSVRR…EKARRNMKDV (64 aa)).

It belongs to the universal ribosomal protein uS5 family. As to quaternary structure, part of the 30S ribosomal subunit. Contacts proteins S4 and S8.

Its function is as follows. With S4 and S12 plays an important role in translational accuracy. In terms of biological role, located at the back of the 30S subunit body where it stabilizes the conformation of the head with respect to the body. In Hydrogenovibrio crunogenus (strain DSM 25203 / XCL-2) (Thiomicrospira crunogena), this protein is Small ribosomal subunit protein uS5.